The chain runs to 271 residues: Tryptophan synthase alpha chain (271 aa).

Active-site proton acceptor residues include glutamate 56 and aspartate 67.

Belongs to the TrpA family. In terms of assembly, tetramer of two alpha and two beta chains.

The enzyme catalyses (1S,2R)-1-C-(indol-3-yl)glycerol 3-phosphate + L-serine = D-glyceraldehyde 3-phosphate + L-tryptophan + H2O. Its pathway is amino-acid biosynthesis; L-tryptophan biosynthesis; L-tryptophan from chorismate: step 5/5. In terms of biological role, the alpha subunit is responsible for the aldol cleavage of indoleglycerol phosphate to indole and glyceraldehyde 3-phosphate. The polypeptide is Tryptophan synthase alpha chain (Mycolicibacterium paratuberculosis (strain ATCC BAA-968 / K-10) (Mycobacterium paratuberculosis)).